The chain runs to 144 residues: AP-4 complex subunit sigma-1 (144 aa).

It belongs to the adaptor complexes small subunit family. In terms of assembly, adaptor protein complex 4 (AP-4) is a heterotetramer composed of two large adaptins (epsilon-type subunit AP4E1 and beta-type subunit AP4B1), a medium adaptin (mu-type subunit AP4M1) and a small adaptin (sigma-type AP4S1).

The protein resides in the golgi apparatus. It localises to the trans-Golgi network membrane. Functionally, component of the adaptor protein complex 4 (AP-4). Adaptor protein complexes are vesicle coat components involved both in vesicle formation and cargo selection. They control the vesicular transport of proteins in different trafficking pathways. AP-4 forms a non clathrin-associated coat on vesicles departing the trans-Golgi network (TGN) and may be involved in the targeting of proteins from the trans-Golgi network (TGN) to the endosomal-lysosomal system. It is also involved in protein sorting to the basolateral membrane in epithelial cells and the proper asymmetric localization of somatodendritic proteins in neurons. AP-4 is involved in the recognition and binding of tyrosine-based sorting signals found in the cytoplasmic part of cargos, but may also recognize other types of sorting signal. This chain is AP-4 complex subunit sigma-1, found in Mus musculus (Mouse).